Consider the following 172-residue polypeptide: Adenine phosphoribosyltransferase (172 aa).

Belongs to the purine/pyrimidine phosphoribosyltransferase family. In terms of assembly, homodimer.

The protein localises to the cytoplasm. It carries out the reaction AMP + diphosphate = 5-phospho-alpha-D-ribose 1-diphosphate + adenine. It functions in the pathway purine metabolism; AMP biosynthesis via salvage pathway; AMP from adenine: step 1/1. Its function is as follows. Catalyzes a salvage reaction resulting in the formation of AMP, that is energically less costly than de novo synthesis. The polypeptide is Adenine phosphoribosyltransferase (Malacoplasma penetrans (strain HF-2) (Mycoplasma penetrans)).